A 324-amino-acid polypeptide reads, in one-letter code: Lipoyl synthase (324 aa).

[4Fe-4S] cluster is bound by residues Cys72, Cys77, Cys83, Cys98, Cys102, Cys105, and Ser313. The region spanning Phe84–Leu302 is the Radical SAM core domain.

It belongs to the radical SAM superfamily. Lipoyl synthase family. [4Fe-4S] cluster serves as cofactor.

The protein resides in the cytoplasm. It carries out the reaction [[Fe-S] cluster scaffold protein carrying a second [4Fe-4S](2+) cluster] + N(6)-octanoyl-L-lysyl-[protein] + 2 oxidized [2Fe-2S]-[ferredoxin] + 2 S-adenosyl-L-methionine + 4 H(+) = [[Fe-S] cluster scaffold protein] + N(6)-[(R)-dihydrolipoyl]-L-lysyl-[protein] + 4 Fe(3+) + 2 hydrogen sulfide + 2 5'-deoxyadenosine + 2 L-methionine + 2 reduced [2Fe-2S]-[ferredoxin]. Its pathway is protein modification; protein lipoylation via endogenous pathway; protein N(6)-(lipoyl)lysine from octanoyl-[acyl-carrier-protein]: step 2/2. In terms of biological role, catalyzes the radical-mediated insertion of two sulfur atoms into the C-6 and C-8 positions of the octanoyl moiety bound to the lipoyl domains of lipoate-dependent enzymes, thereby converting the octanoylated domains into lipoylated derivatives. This is Lipoyl synthase from Dichelobacter nodosus (strain VCS1703A).